A 159-amino-acid polypeptide reads, in one-letter code: Ribosomal RNA large subunit methyltransferase H (159 aa).

S-adenosyl-L-methionine contacts are provided by residues Leu-76, Gly-108, and 127-132 (FSKMTF).

The protein belongs to the RNA methyltransferase RlmH family. As to quaternary structure, homodimer.

The protein localises to the cytoplasm. It carries out the reaction pseudouridine(1915) in 23S rRNA + S-adenosyl-L-methionine = N(3)-methylpseudouridine(1915) in 23S rRNA + S-adenosyl-L-homocysteine + H(+). In terms of biological role, specifically methylates the pseudouridine at position 1915 (m3Psi1915) in 23S rRNA. The protein is Ribosomal RNA large subunit methyltransferase H of Clostridium botulinum (strain Eklund 17B / Type B).